Reading from the N-terminus, the 134-residue chain is MNQRLQRLADQIQRELAVLIRDAVNDPRLTGFVTISSIKVSPDLGYADVYVTIMEPELNDAMTMSNHEESIKVLNKAAGFLRTELSHSLKTRTTPRLRFHYDEVTARGNYMMDLISKAVIKTEENESDEQENEE.

The protein belongs to the RbfA family. Monomer. Binds 30S ribosomal subunits, but not 50S ribosomal subunits or 70S ribosomes.

It is found in the cytoplasm. Its function is as follows. One of several proteins that assist in the late maturation steps of the functional core of the 30S ribosomal subunit. Associates with free 30S ribosomal subunits (but not with 30S subunits that are part of 70S ribosomes or polysomes). Required for efficient processing of 16S rRNA. May interact with the 5'-terminal helix region of 16S rRNA. This is Ribosome-binding factor A from Psychrobacter cryohalolentis (strain ATCC BAA-1226 / DSM 17306 / VKM B-2378 / K5).